Reading from the N-terminus, the 483-residue chain is MGLFDFSVKELHDKLVKKEISPFDLVSESFNRIESVEDKVGSFITLNKEAAFGVAEELGDAGIDPNNMLSGLPIGIKDNIVTKNLRTTAASKILENFDPIYDATVVSKLKNAQTINIGKLNMDEFAMGSSTETSYFHKTHNPWDLSRVPGGSSGGSASAVAAGEVLFSLGSDTGGSIRQPAAFCGVVGMKPTYGRVSRFGLIAFASSLDQIGPITKNVEDNAYLLEAISGLDANDSTSINQPVERFSDSLTGDIKGLRIGVPKEYLGEGVDPGVKQAVLDALKTLEKLGATWDEVSLPHSEYGVASYYILASSEASSNLSRFDGVRYGYRSPNATTLEELYTKTRSEGFGDEVKRRIMLGTYALSSGYYDAYYKKAQQARTLIKQDFVNVFENYDVIIGPSSPTTAFKIDGMINDPITMYSNDILTVPINLAGVPAISVPCGFSDGLPVGLQIIGNYFEESLLYKVAHAFEQETTFHKEKPNL.

Residues K77 and S152 each act as charge relay system in the active site. S176 serves as the catalytic Acyl-ester intermediate.

The protein belongs to the amidase family. GatA subfamily. In terms of assembly, heterotrimer of A, B and C subunits.

The catalysed reaction is L-glutamyl-tRNA(Gln) + L-glutamine + ATP + H2O = L-glutaminyl-tRNA(Gln) + L-glutamate + ADP + phosphate + H(+). Functionally, allows the formation of correctly charged Gln-tRNA(Gln) through the transamidation of misacylated Glu-tRNA(Gln) in organisms which lack glutaminyl-tRNA synthetase. The reaction takes place in the presence of glutamine and ATP through an activated gamma-phospho-Glu-tRNA(Gln). The protein is Glutamyl-tRNA(Gln) amidotransferase subunit A of Listeria monocytogenes serotype 4b (strain F2365).